The sequence spans 421 residues: Alpha-1-antitrypsin-related protein (421 aa).

Residues 1–21 form the signal peptide; that stretch reads MPFSVSWGILLLAGLCCLVPS. N-linked (GlcNAc...) asparagine glycans are attached at residues N56, N110, N148, and N274.

This sequence belongs to the serpin family. Interacts with CANX and PDIA3. Glycosylated. In terms of tissue distribution, expressed in the liver, leukocytes and testis. Also detected in brain, colon, uterus, esophagus, spleen, trachea, kidney and lung.

It is found in the endoplasmic reticulum. Putative serine protease inhibitor. The protein is Alpha-1-antitrypsin-related protein (SERPINA2) of Homo sapiens (Human).